We begin with the raw amino-acid sequence, 429 residues long: Glutamate-1-semialdehyde 2,1-aminomutase 2 (429 aa).

Lys-268 is modified (N6-(pyridoxal phosphate)lysine).

This sequence belongs to the class-III pyridoxal-phosphate-dependent aminotransferase family. HemL subfamily. In terms of assembly, homodimer. Requires pyridoxal 5'-phosphate as cofactor.

The protein localises to the cytoplasm. The enzyme catalyses (S)-4-amino-5-oxopentanoate = 5-aminolevulinate. The protein operates within porphyrin-containing compound metabolism; protoporphyrin-IX biosynthesis; 5-aminolevulinate from L-glutamyl-tRNA(Glu): step 2/2. This is Glutamate-1-semialdehyde 2,1-aminomutase 2 from Listeria monocytogenes serotype 4a (strain HCC23).